A 408-amino-acid chain; its full sequence is Inhibin beta B chain (408 aa).

The N-terminal stretch at 1–28 is a signal peptide; sequence MDGLPGRALGAACLLMLAVGSLGPGVWG. The tract at residues 29 to 60 is disordered; it reads SPTPPPLPAAPQPPPPPPGAPGGSQDTCTSCG. The propeptide occupies 29 to 293; that stretch reads SPTPPPLPAA…GDSRHRIRKR (265 aa). Pro residues predominate over residues 30 to 48; that stretch reads PTPPPLPAAPQPPPPPPGA. A glycan (N-linked (GlcNAc...) asparagine) is linked at Asn-94. Disulfide bonds link Cys-297–Cys-305, Cys-304–Cys-373, Cys-333–Cys-405, and Cys-337–Cys-407.

It belongs to the TGF-beta family. As to quaternary structure, dimeric, linked by one or more disulfide bonds. Inhibin B is a dimer of alpha and beta-B. Activin B is a homodimer of beta-B. Activin AB is a dimer of beta-A and beta-B. Interacts with FST and FSTL3.

The protein resides in the secreted. Inhibins and activins inhibit and activate, respectively, the secretion of follitropin by the pituitary gland. Inhibins/activins are involved in regulating a number of diverse functions such as hypothalamic and pituitary hormone secretion, gonadal hormone secretion, germ cell development and maturation, erythroid differentiation, insulin secretion, nerve cell survival, embryonic axial development or bone growth, depending on their subunit composition. Inhibins appear to oppose the functions of activins. Functionally, activin B is a dimer of alpha and beta-B that plays a role in several essential biological processes including embryonic development, stem cell maintenance and differentiation, haematopoiesis, cell proliferation and wound healing. Signals through type I receptor ACVR1C, abundantly expressed in pancreatic beta cells, and type II receptors like ACVR2A. Upon ligand binding, these receptors phosphorylate intracellular signaling mediators SMAD2 and SMAD3, which form a complex with SMAD4, translocate to the nucleus, and regulate gene expression. Plays a crucial role in the induction of hepcidin by inflammation through activation of ACVR1C and subsequent phosphorylation of SMAD1/5/8. Regulates adipocyte lipid metabolism by decreasing non-esterified fatty acids and glycerol release and increases intracellular triglyceride content. Stimulates wound healing by promoting cell migration and hair follicle regeneration through the JNK and ERK signaling pathways downstream of RHOA. Its function is as follows. Inhibin B is a dimer of alpha and beta-B that plays a crucial role in the regulation of the reproductive system by inhibiting the secretion of follicle-stimulating hormone (FSH) from the anterior pituitary gland. Thereby, maintains reproductive homeostasis in both males and females. Acts as a more potent suppressor of FSH release than inhibin A. Functions as competitive receptor antagonist binding activin type II receptors with high affinity in the presence of the TGF-beta type III coreceptor/TGFBR3L. The sequence is that of Inhibin beta B chain (INHBB) from Bos taurus (Bovine).